The following is a 554-amino-acid chain: Glucose-6-phosphate isomerase (554 aa).

Glu-358 acts as the Proton donor in catalysis. Catalysis depends on residues His-389 and Lys-515. Residues 527–540 (SDGSPQRQSDSSTD) show a composition bias toward polar residues. The tract at residues 527 to 554 (SDGSPQRQSDSSTDALVRRYRTQRGRTG) is disordered. Residues 544–554 (RRYRTQRGRTG) are compositionally biased toward basic residues.

The protein belongs to the GPI family.

Its subcellular location is the cytoplasm. The enzyme catalyses alpha-D-glucose 6-phosphate = beta-D-fructose 6-phosphate. Its pathway is carbohydrate biosynthesis; gluconeogenesis. The protein operates within carbohydrate degradation; glycolysis; D-glyceraldehyde 3-phosphate and glycerone phosphate from D-glucose: step 2/4. Catalyzes the reversible isomerization of glucose-6-phosphate to fructose-6-phosphate. This Mycobacterium ulcerans (strain Agy99) protein is Glucose-6-phosphate isomerase.